Here is a 166-residue protein sequence, read N- to C-terminus: Phospholipase A2 inhibitor (166 aa).

A signal peptide spans 1–19 (MRLILLSGLLLLGIFLANG). Residues 46 to 161 (LRGAFLTVYK…CDDNLLVVCE (116 aa)) form the C-type lectin domain. N-linked (GlcNAc...) asparagine glycans are attached at residues asparagine 61 and asparagine 122. Disulfide bonds link cysteine 83–cysteine 160 and cysteine 138–cysteine 152.

This sequence belongs to the alpha-type phospholipase A2 inhibitor family. Homotrimer; non-covalently linked. Expressed by the liver.

It is found in the secreted. Functionally, this phospholipase A2 inhibitor binds directly phospholipase A2 in the presence or absence of calcium. This Bothrops alternatus (Urutu) protein is Phospholipase A2 inhibitor.